A 164-amino-acid chain; its full sequence is Phosphopantetheine adenylyltransferase (164 aa).

Belongs to the eukaryotic CoaD family.

The protein localises to the cytoplasm. The enzyme catalyses (R)-4'-phosphopantetheine + ATP + H(+) = 3'-dephospho-CoA + diphosphate. It participates in cofactor biosynthesis; coenzyme A biosynthesis. In terms of biological role, reversibly transfers an adenylyl group from ATP to 4'-phosphopantetheine, yielding dephospho-CoA (dPCoA) and pyrophosphate. The protein is Phosphopantetheine adenylyltransferase of Methanothermobacter thermautotrophicus (strain ATCC 29096 / DSM 1053 / JCM 10044 / NBRC 100330 / Delta H) (Methanobacterium thermoautotrophicum).